The primary structure comprises 409 residues: Peptidase T (409 aa).

Zn(2+) is bound at residue His-78. Asp-80 is an active-site residue. Asp-140 lines the Zn(2+) pocket. The active-site Proton acceptor is Glu-173. Zn(2+) contacts are provided by Glu-174, Asp-196, and His-379.

This sequence belongs to the peptidase M20B family. The cofactor is Zn(2+).

It is found in the cytoplasm. It catalyses the reaction Release of the N-terminal residue from a tripeptide.. Cleaves the N-terminal amino acid of tripeptides. This Serratia proteamaculans (strain 568) protein is Peptidase T.